The chain runs to 480 residues: Protein nucleotidyltransferase YdiU (480 aa).

The ATP site is built by glycine 86, glycine 88, arginine 89, lysine 109, aspartate 121, glycine 122, arginine 172, and arginine 179. Residue aspartate 248 is the Proton acceptor of the active site. Asparagine 249 and aspartate 258 together coordinate Mg(2+). Aspartate 258 contacts ATP.

It belongs to the SELO family. It depends on Mg(2+) as a cofactor. The cofactor is Mn(2+).

The catalysed reaction is L-seryl-[protein] + ATP = 3-O-(5'-adenylyl)-L-seryl-[protein] + diphosphate. It catalyses the reaction L-threonyl-[protein] + ATP = 3-O-(5'-adenylyl)-L-threonyl-[protein] + diphosphate. The enzyme catalyses L-tyrosyl-[protein] + ATP = O-(5'-adenylyl)-L-tyrosyl-[protein] + diphosphate. It carries out the reaction L-histidyl-[protein] + UTP = N(tele)-(5'-uridylyl)-L-histidyl-[protein] + diphosphate. The catalysed reaction is L-seryl-[protein] + UTP = O-(5'-uridylyl)-L-seryl-[protein] + diphosphate. It catalyses the reaction L-tyrosyl-[protein] + UTP = O-(5'-uridylyl)-L-tyrosyl-[protein] + diphosphate. Its function is as follows. Nucleotidyltransferase involved in the post-translational modification of proteins. It can catalyze the addition of adenosine monophosphate (AMP) or uridine monophosphate (UMP) to a protein, resulting in modifications known as AMPylation and UMPylation. The sequence is that of Protein nucleotidyltransferase YdiU from Salmonella agona (strain SL483).